A 348-amino-acid chain; its full sequence is Eukaryotic translation initiation factor 3 subunit H (348 aa).

Residues 1 to 25 (MASRKEGSGAAGGGFGASKGKGKAA) are disordered. The segment covering 9–19 (GAAGGGFGASK) has biased composition (gly residues). The MPN domain occupies 35-169 (VQIDGLVVLK…LKAYRLTPKL (135 aa)). Residues 266 to 285 (QQQQKHQYQQRRQQENLQRQ) are compositionally biased toward low complexity. Residues 266–304 (QQQQKHQYQQRRQQENLQRQSRGEAPLPEEDINKLFKPP) are disordered.

This sequence belongs to the eIF-3 subunit H family. As to quaternary structure, component of the eukaryotic translation initiation factor 3 (eIF-3) complex, which is composed of 13 subunits: EIF3A, EIF3B, EIF3C, EIF3D, EIF3E, EIF3F, EIF3G, EIF3H, EIF3I, EIF3J, EIF3K, EIF3L and EIF3M.

The protein resides in the cytoplasm. Functionally, component of the eukaryotic translation initiation factor 3 (eIF-3) complex, which is involved in protein synthesis of a specialized repertoire of mRNAs and, together with other initiation factors, stimulates binding of mRNA and methionyl-tRNAi to the 40S ribosome. The eIF-3 complex specifically targets and initiates translation of a subset of mRNAs involved in cell proliferation. This chain is Eukaryotic translation initiation factor 3 subunit H, found in Gallus gallus (Chicken).